The sequence spans 237 residues: Periplasmic deoxyribonuclease (237 aa).

The N-terminal stretch at 1 to 27 (MSRPSRVLGLPLLSLGLTLLVSTPLQA) is a signal peptide.

The protein belongs to the EndA/NucM nuclease family.

The protein localises to the periplasm. Its function is as follows. Endonuclease which is capable of degrading plasmid DNA. In Aeromonas hydrophila, this protein is Periplasmic deoxyribonuclease (dnsH).